Consider the following 209-residue polypeptide: Large ribosomal subunit protein bL25 (209 aa).

A disordered region spans residues 183-209 (TAGERPAAEPAAAPGAAPAAGPEEAEE). The segment covering 184–209 (AGERPAAEPAAAPGAAPAAGPEEAEE) has biased composition (low complexity).

It belongs to the bacterial ribosomal protein bL25 family. CTC subfamily. In terms of assembly, part of the 50S ribosomal subunit; part of the 5S rRNA/L5/L18/L25 subcomplex. Contacts the 5S rRNA. Binds to the 5S rRNA independently of L5 and L18.

In terms of biological role, this is one of the proteins that binds to the 5S RNA in the ribosome where it forms part of the central protuberance. The chain is Large ribosomal subunit protein bL25 from Pelotomaculum thermopropionicum (strain DSM 13744 / JCM 10971 / SI).